The chain runs to 157 residues: Rieske domain-containing protein (157 aa).

Met-1 bears the N-acetylmethionine mark. Ser-6 is modified (phosphoserine). Rieske domains lie at 16–94 (SSVC…TGEG) and 17–131 (SVCV…NIYV). [2Fe-2S] cluster is bound by residues Cys-57, His-59, Cys-80, and His-83.

[2Fe-2S] cluster is required as a cofactor.

In Homo sapiens (Human), this protein is Rieske domain-containing protein (RFESD).